The primary structure comprises 197 residues: dTTP/UTP pyrophosphatase (197 aa).

The active-site Proton acceptor is the Asp-70.

Belongs to the Maf family. YhdE subfamily. It depends on a divalent metal cation as a cofactor.

The protein localises to the cytoplasm. The enzyme catalyses dTTP + H2O = dTMP + diphosphate + H(+). It catalyses the reaction UTP + H2O = UMP + diphosphate + H(+). In terms of biological role, nucleoside triphosphate pyrophosphatase that hydrolyzes dTTP and UTP. May have a dual role in cell division arrest and in preventing the incorporation of modified nucleotides into cellular nucleic acids. This is dTTP/UTP pyrophosphatase (yhdE) from Escherichia coli O157:H7.